Consider the following 382-residue polypeptide: Lipid-A-disaccharide synthase (382 aa).

It belongs to the LpxB family.

It carries out the reaction 2-N,3-O-bis[(3R)-3-hydroxytetradecanoyl]-alpha-D-glucosaminyl 1-phosphate + UDP-2-N,3-O-bis[(3R)-3-hydroxytetradecanoyl]-alpha-D-glucosamine = lipid A disaccharide (E. coli) + UDP + H(+). The enzyme catalyses a lipid X + a UDP-2-N,3-O-bis[(3R)-3-hydroxyacyl]-alpha-D-glucosamine = a lipid A disaccharide + UDP + H(+). It participates in glycolipid biosynthesis; lipid IV(A) biosynthesis; lipid IV(A) from (3R)-3-hydroxytetradecanoyl-[acyl-carrier-protein] and UDP-N-acetyl-alpha-D-glucosamine: step 5/6. Condensation of UDP-2,3-diacylglucosamine and 2,3-diacylglucosamine-1-phosphate to form lipid A disaccharide, a precursor of lipid A, a phosphorylated glycolipid that anchors the lipopolysaccharide to the outer membrane of the cell. This is Lipid-A-disaccharide synthase from Escherichia coli (strain ATCC 8739 / DSM 1576 / NBRC 3972 / NCIMB 8545 / WDCM 00012 / Crooks).